Consider the following 165-residue polypeptide: Biosynthetic peptidoglycan transglycosylase (165 aa).

It belongs to the glycosyltransferase 51 family.

It is found in the cell inner membrane. It catalyses the reaction [GlcNAc-(1-&gt;4)-Mur2Ac(oyl-L-Ala-gamma-D-Glu-L-Lys-D-Ala-D-Ala)](n)-di-trans,octa-cis-undecaprenyl diphosphate + beta-D-GlcNAc-(1-&gt;4)-Mur2Ac(oyl-L-Ala-gamma-D-Glu-L-Lys-D-Ala-D-Ala)-di-trans,octa-cis-undecaprenyl diphosphate = [GlcNAc-(1-&gt;4)-Mur2Ac(oyl-L-Ala-gamma-D-Glu-L-Lys-D-Ala-D-Ala)](n+1)-di-trans,octa-cis-undecaprenyl diphosphate + di-trans,octa-cis-undecaprenyl diphosphate + H(+). It functions in the pathway cell wall biogenesis; peptidoglycan biosynthesis. Functionally, peptidoglycan polymerase that catalyzes glycan chain elongation from lipid-linked precursors. This chain is Biosynthetic peptidoglycan transglycosylase, found in Neisseria meningitidis.